A 159-amino-acid polypeptide reads, in one-letter code: MLTAPSLSRFKSPFISSPLKLPTLSSSFFTQKFHQTCRRRNSYPCIKAVDLDQNTVIAITVGVLSVAIGVGIPVFYETQIDNAAKRENTQPCFPCTGTGAQKCRFCMGTGSVTVELGGGETEVSRCINCDGAGGLTCTTCQGSGIQPRYLDRREFKDDD.

The transit peptide at 1 to 47 directs the protein to the chloroplast; it reads MLTAPSLSRFKSPFISSPLKLPTLSSSFFTQKFHQTCRRRNSYPCIK. The chain crosses the membrane as a helical span at residues 56–76; sequence VIAITVGVLSVAIGVGIPVFY. The segment at 85 to 145 is CR-type-like; sequence KRENTQPCFP…TCTTCQGSGI (61 aa). CXXCXGXG motif repeat units lie at residues 92 to 99, 103 to 110, 126 to 133, and 137 to 144; these read CFPCTGTG, CRFCMGTG, CINCDGAG, and CTTCQGSG.

As to expression, expressed in source leaves. Lower levels of expression in fruits and stems.

The protein resides in the plastid. Its subcellular location is the chloroplast thylakoid membrane. Participates in determining harvest index (HI) by affecting source-sink carbon distribution. Up-regulates the conversion of fixed carbon to exportable sugars. The sequence is that of Protein SPA, chloroplastic from Solanum lycopersicum (Tomato).